Here is a 268-residue protein sequence, read N- to C-terminus: MIMSSYLMDSNYIDPKFPPCEEYSQNSYIPEHSPEYYSRARDSGYQHHHQELYPPRASYQERQYNCASIPEPDTQRGHGLPHAGHLLGKGQSASCEPPPLPLSPATPSAASSACNQATPEHPNSSASAKQPVVYPWMKKIHVSTVNSSYNGAEPKRSRTAYTRQQVLELEKEFHYNRYLTRRRRIEIAHSLVLSERQIKIWFQNRRMKWKKDHRLPNTKVRSSSSTGISSGSNTSSAAGVVAAASTTNTMSASEDLSGTERGEDITRL.

The interval proline 70 to lysine 129 is disordered. Low complexity-rich tracts occupy residues glycine 77 to cysteine 95 and alanine 105 to cysteine 114. Polar residues predominate over residues asparagine 115–alanine 128. An Antp-type hexapeptide motif is present at residues valine 133–lysine 138. Residues proline 154 to histidine 213 constitute a DNA-binding region (homeobox). A disordered region spans residues aspartate 212–leucine 268. Low complexity predominate over residues serine 222–serine 253. Residues glycine 258–leucine 268 are compositionally biased toward basic and acidic residues.

Belongs to the Antp homeobox family. Deformed subfamily.

Its subcellular location is the nucleus. Functionally, sequence-specific transcription factor which is part of a developmental regulatory system that provides cells with specific positional identities on the anterior-posterior axis. The protein is Homeobox protein Hox-C4a (hoxc4a) of Danio rerio (Zebrafish).